The sequence spans 306 residues: Glutathione transport system permease protein GsiC (306 aa).

Topologically, residues 1 to 8 are cytoplasmic; sequence MLNYVLKR. Residues 9-29 form a helical membrane-spanning segment; sequence LLGLIPTLLIVAVLVFLFVHL. At 30–102 the chain is on the periplasmic side; it reads LPGDPARLIA…SRFLPTLWLT (73 aa). In terms of domain architecture, ABC transmembrane type-1 spans 95–292; it reads FLPTLWLTIT…LEFILINLVV (198 aa). A helical membrane pass occupies residues 103–123; sequence ITSMIWAVLFGMAIGIAAAVW. Residues 124-134 lie on the Cytoplasmic side of the membrane; it reads RNRWPDRVGMT. Residues 135 to 155 traverse the membrane as a helical segment; sequence LAVTGISFPAFALGMLLMQIF. The Periplasmic segment spans residues 156-168; it reads SVDLGWLPTVGAD. A helical membrane pass occupies residues 169–189; sequence SWQHYILPSLTLGAAVASVMA. Topologically, residues 190–228 are cytoplasmic; the sequence is RFTRSSFVDVLSEDYMRTARAKGVSETWVVLKHGLRNAM. A helical membrane pass occupies residues 229 to 249; the sequence is IPVVTMMGLQFGFLLGGSIVV. The Periplasmic segment spans residues 250-278; it reads EKVFNWPGLGRLLVDSVDMRDYPVIQAEV. A helical membrane pass occupies residues 279-299; that stretch reads LLFSLEFILINLVVDVLYAAI. Residues 300–306 are Cytoplasmic-facing; that stretch reads NPAIRYK.

The protein belongs to the binding-protein-dependent transport system permease family. As to quaternary structure, the complex is composed of two ATP-binding proteins (GsiA), two transmembrane proteins (GsiC and GsiD) and a solute-binding protein (GsiB).

It localises to the cell inner membrane. Part of the ABC transporter complex GsiABCD involved in glutathione import. Probably responsible for the translocation of the substrate across the membrane. The chain is Glutathione transport system permease protein GsiC from Salmonella choleraesuis (strain SC-B67).